The chain runs to 115 residues: Holo-[acyl-carrier-protein] synthase (115 aa).

Mg(2+) contacts are provided by Asp-8 and Glu-50.

The protein belongs to the P-Pant transferase superfamily. AcpS family. It depends on Mg(2+) as a cofactor.

It is found in the cytoplasm. The catalysed reaction is apo-[ACP] + CoA = holo-[ACP] + adenosine 3',5'-bisphosphate + H(+). Its function is as follows. Transfers the 4'-phosphopantetheine moiety from coenzyme A to a Ser of acyl-carrier-protein. This chain is Holo-[acyl-carrier-protein] synthase, found in Arthrobacter sp. (strain FB24).